A 240-amino-acid polypeptide reads, in one-letter code: Phosphoribosylaminoimidazole-succinocarboxamide synthase (240 aa).

It belongs to the SAICAR synthetase family.

It catalyses the reaction 5-amino-1-(5-phospho-D-ribosyl)imidazole-4-carboxylate + L-aspartate + ATP = (2S)-2-[5-amino-1-(5-phospho-beta-D-ribosyl)imidazole-4-carboxamido]succinate + ADP + phosphate + 2 H(+). Its pathway is purine metabolism; IMP biosynthesis via de novo pathway; 5-amino-1-(5-phospho-D-ribosyl)imidazole-4-carboxamide from 5-amino-1-(5-phospho-D-ribosyl)imidazole-4-carboxylate: step 1/2. This chain is Phosphoribosylaminoimidazole-succinocarboxamide synthase, found in Wolbachia pipientis wMel.